We begin with the raw amino-acid sequence, 144 residues long: Bacilliredoxin BC_2157 (144 aa).

It belongs to the bacilliredoxin family.

The protein is Bacilliredoxin BC_2157 of Bacillus cereus (strain ATCC 14579 / DSM 31 / CCUG 7414 / JCM 2152 / NBRC 15305 / NCIMB 9373 / NCTC 2599 / NRRL B-3711).